The sequence spans 71 residues: Translation initiation factor IF-1 (71 aa).

One can recognise an S1-like domain in the interval 1–71; the sequence is MAKQSAIEQD…LSKARITYRY (71 aa).

Belongs to the IF-1 family. Component of the 30S ribosomal translation pre-initiation complex which assembles on the 30S ribosome in the order IF-2 and IF-3, IF-1 and N-formylmethionyl-tRNA(fMet); mRNA recruitment can occur at any time during PIC assembly.

It localises to the cytoplasm. Its function is as follows. One of the essential components for the initiation of protein synthesis. Stabilizes the binding of IF-2 and IF-3 on the 30S subunit to which N-formylmethionyl-tRNA(fMet) subsequently binds. Helps modulate mRNA selection, yielding the 30S pre-initiation complex (PIC). Upon addition of the 50S ribosomal subunit IF-1, IF-2 and IF-3 are released leaving the mature 70S translation initiation complex. The sequence is that of Translation initiation factor IF-1 from Flavobacterium johnsoniae (strain ATCC 17061 / DSM 2064 / JCM 8514 / BCRC 14874 / CCUG 350202 / NBRC 14942 / NCIMB 11054 / UW101) (Cytophaga johnsonae).